Here is a 132-residue protein sequence, read N- to C-terminus: Small ribosomal subunit protein uS8c (132 aa).

This sequence belongs to the universal ribosomal protein uS8 family. Part of the 30S ribosomal subunit.

It localises to the plastid. Its subcellular location is the chloroplast. Its function is as follows. One of the primary rRNA binding proteins, it binds directly to 16S rRNA central domain where it helps coordinate assembly of the platform of the 30S subunit. The sequence is that of Small ribosomal subunit protein uS8c (rps8) from Gracilaria tenuistipitata var. liui (Red alga).